The primary structure comprises 220 residues: ATP phosphoribosyltransferase (220 aa).

This sequence belongs to the ATP phosphoribosyltransferase family. Short subfamily. In terms of assembly, heteromultimer composed of HisG and HisZ subunits.

It localises to the cytoplasm. The catalysed reaction is 1-(5-phospho-beta-D-ribosyl)-ATP + diphosphate = 5-phospho-alpha-D-ribose 1-diphosphate + ATP. It participates in amino-acid biosynthesis; L-histidine biosynthesis; L-histidine from 5-phospho-alpha-D-ribose 1-diphosphate: step 1/9. Functionally, catalyzes the condensation of ATP and 5-phosphoribose 1-diphosphate to form N'-(5'-phosphoribosyl)-ATP (PR-ATP). Has a crucial role in the pathway because the rate of histidine biosynthesis seems to be controlled primarily by regulation of HisG enzymatic activity. The chain is ATP phosphoribosyltransferase from Janthinobacterium sp. (strain Marseille) (Minibacterium massiliensis).